The sequence spans 61 residues: Small ribosomal subunit protein uS14 (61 aa).

Zn(2+)-binding residues include Cys-24, Cys-27, Cys-40, and Cys-43.

Belongs to the universal ribosomal protein uS14 family. Zinc-binding uS14 subfamily. Part of the 30S ribosomal subunit. Contacts proteins S3 and S10. It depends on Zn(2+) as a cofactor.

Functionally, binds 16S rRNA, required for the assembly of 30S particles and may also be responsible for determining the conformation of the 16S rRNA at the A site. This chain is Small ribosomal subunit protein uS14, found in Brevibacillus brevis (strain 47 / JCM 6285 / NBRC 100599).